A 189-amino-acid polypeptide reads, in one-letter code: UPF0200 protein Smar_1234 (189 aa).

Position 10–17 (10–17 (GMPGAGKS)) interacts with ATP.

This sequence belongs to the UPF0200 family.

This Staphylothermus marinus (strain ATCC 43588 / DSM 3639 / JCM 9404 / F1) protein is UPF0200 protein Smar_1234.